Consider the following 93-residue polypeptide: Defensin-like protein 209 (93 aa).

The first 19 residues, 1 to 19 (MKITILFLTLLVLSSSCTS), serve as a signal peptide directing secretion. Cystine bridges form between C63/C80, C66/C85, and C70/C87.

The protein belongs to the DEFL family.

It localises to the secreted. The polypeptide is Defensin-like protein 209 (Arabidopsis thaliana (Mouse-ear cress)).